Here is a 426-residue protein sequence, read N- to C-terminus: Glutamate-1-semialdehyde 2,1-aminomutase (426 aa).

Lys-265 is subject to N6-(pyridoxal phosphate)lysine.

This sequence belongs to the class-III pyridoxal-phosphate-dependent aminotransferase family. HemL subfamily. As to quaternary structure, homodimer. The cofactor is pyridoxal 5'-phosphate.

It localises to the cytoplasm. It catalyses the reaction (S)-4-amino-5-oxopentanoate = 5-aminolevulinate. The protein operates within porphyrin-containing compound metabolism; protoporphyrin-IX biosynthesis; 5-aminolevulinate from L-glutamyl-tRNA(Glu): step 2/2. This chain is Glutamate-1-semialdehyde 2,1-aminomutase, found in Salmonella choleraesuis (strain SC-B67).